The sequence spans 294 residues: Protoheme IX farnesyltransferase (294 aa).

Transmembrane regions (helical) follow at residues 25-45 (SLVLVTAAGGMWLAPGHMGAV), 48-68 (LVTLLATAGTVGAANALNCYW), 92-112 (AVALWFGISLAAVSLPALALG), 115-135 (VLTAALGLVALLSYVLAYTPL), 141-161 (AAMLVGGVPGALPPLMGWTAV), 170-190 (FSLFAIMFLWQMPHFIAIALF), 216-236 (VVLYLVALIPMTLLPFQLHIA), 240-260 (YLAAAVLLGLSFLGLGAWGFF), and 272-292 (FFFSLIYLTGLFAALALDRVP).

It belongs to the UbiA prenyltransferase family. Protoheme IX farnesyltransferase subfamily.

The protein resides in the cell inner membrane. It catalyses the reaction heme b + (2E,6E)-farnesyl diphosphate + H2O = Fe(II)-heme o + diphosphate. Its pathway is porphyrin-containing compound metabolism; heme O biosynthesis; heme O from protoheme: step 1/1. Functionally, converts heme B (protoheme IX) to heme O by substitution of the vinyl group on carbon 2 of heme B porphyrin ring with a hydroxyethyl farnesyl side group. The protein is Protoheme IX farnesyltransferase of Myxococcus xanthus (strain DK1622).